The sequence spans 369 residues: MKSRAAVAFAPGKPLEIVEIDVAPPKKGEVLIKVTHTGVCHTDAFTLSGDDPEGVFPVVLGHEGAGVVVEVGEGVTSVKPGDHVIPLYTAECGECEFCRSGKTNLCVAVRETQGKGLMPDGTTRFSYNGQPLYHYMGCSTFSEYTVVAEVSLAKINPEANHEHVCLLGCGVTTGIGAVHNTAKVQPGDSVAVFGLGAIGLAVVQGARQAKAGRIIAIDTNPKKFDLARRFGATDCINPNDYDKPIKDVLLDINKWGIDHTFECIGNVNVMRAALESAHRGWGQSVIIGVAGSGQEISTRPFQLVTGRVWKGSAFGGVKGRSQLPGMVEDAMKGDIDLEPFVTHTMSLDEINDAFDLMHEGKSIRTVIRY.

Zn(2+) is bound by residues cysteine 40, histidine 62, cysteine 92, cysteine 95, cysteine 98, cysteine 106, and cysteine 169.

It belongs to the zinc-containing alcohol dehydrogenase family. Class-III subfamily. As to quaternary structure, homodimer. Zn(2+) is required as a cofactor.

The protein resides in the cytoplasm. It carries out the reaction S-(hydroxymethyl)glutathione + NADP(+) = S-formylglutathione + NADPH + H(+). It catalyses the reaction S-(hydroxymethyl)glutathione + NAD(+) = S-formylglutathione + NADH + H(+). The enzyme catalyses a primary alcohol + NAD(+) = an aldehyde + NADH + H(+). The catalysed reaction is a secondary alcohol + NAD(+) = a ketone + NADH + H(+). It carries out the reaction S-nitrosoglutathione + NADH + H(+) = S-(hydroxysulfenamide)glutathione + NAD(+). In terms of biological role, has high formaldehyde dehydrogenase activity in the presence of glutathione and catalyzes the oxidation of normal alcohols in a reaction that is not GSH-dependent. In addition, hemithiolacetals other than those formed from GSH, including omega-thiol fatty acids, also are substrates. Also acts as a S-nitroso-glutathione reductase by catalyzing the NADH-dependent reduction of S-nitrosoglutathione. The protein is S-(hydroxymethyl)glutathione dehydrogenase (frmA) of Escherichia coli (strain ATCC 8739 / DSM 1576 / NBRC 3972 / NCIMB 8545 / WDCM 00012 / Crooks).